Consider the following 151-residue polypeptide: Small ribosomal subunit protein uS15 (151 aa).

The protein belongs to the universal ribosomal protein uS15 family. In terms of assembly, component of the small ribosomal subunit. Mature ribosomes consist of a small (40S) and a large (60S) subunit. The 40S subunit contains about 32 different proteins and 1 molecule of RNA (18S). The 60S subunit contains 45 different proteins and 3 molecules of RNA (25S, 5.8S and 5S).

The protein resides in the cytoplasm. In terms of biological role, component of the ribosome, a large ribonucleoprotein complex responsible for the synthesis of proteins in the cell. The small ribosomal subunit (SSU) binds messenger RNAs (mRNAs) and translates the encoded message by selecting cognate aminoacyl-transfer RNA (tRNA) molecules. The large subunit (LSU) contains the ribosomal catalytic site termed the peptidyl transferase center (PTC), which catalyzes the formation of peptide bonds, thereby polymerizing the amino acids delivered by tRNAs into a polypeptide chain. The nascent polypeptides leave the ribosome through a tunnel in the LSU and interact with protein factors that function in enzymatic processing, targeting, and the membrane insertion of nascent chains at the exit of the ribosomal tunnel. This Candida albicans (strain SC5314 / ATCC MYA-2876) (Yeast) protein is Small ribosomal subunit protein uS15 (RPS13).